The following is a 433-amino-acid chain: Adenylosuccinate synthetase (433 aa).

Residues 11-17 (GDEGKGK) and 39-41 (GHT) each bind GTP. Catalysis depends on aspartate 12, which acts as the Proton acceptor. Mg(2+) is bound by residues aspartate 12 and glycine 39. Residues 12–15 (DEGK), 37–40 (NAGH), threonine 134, arginine 148, asparagine 230, threonine 245, and arginine 309 each bind IMP. Histidine 40 functions as the Proton donor in the catalytic mechanism. 305–311 (VTTGRKR) is a substrate binding site. GTP contacts are provided by residues arginine 311, 337–339 (KLD), and 419–421 (GTG).

The protein belongs to the adenylosuccinate synthetase family. Homodimer. It depends on Mg(2+) as a cofactor.

The protein resides in the cytoplasm. The enzyme catalyses IMP + L-aspartate + GTP = N(6)-(1,2-dicarboxyethyl)-AMP + GDP + phosphate + 2 H(+). It functions in the pathway purine metabolism; AMP biosynthesis via de novo pathway; AMP from IMP: step 1/2. In terms of biological role, plays an important role in the de novo pathway and in the salvage pathway of purine nucleotide biosynthesis. Catalyzes the first committed step in the biosynthesis of AMP from IMP. The sequence is that of Adenylosuccinate synthetase from Eremothecium gossypii (strain ATCC 10895 / CBS 109.51 / FGSC 9923 / NRRL Y-1056) (Yeast).